The chain runs to 234 residues: Opacity protein opA51 (234 aa).

Residue alanine 1 is a signal peptide.

This sequence belongs to the opacity porin family.

The protein resides in the cell outer membrane. Its function is as follows. Implicated in a number of adherence functions. OPA proteins are implicated in pathogenesis and are subject to phase variation. This is Opacity protein opA51 (opaB) from Neisseria gonorrhoeae.